Consider the following 465-residue polypeptide: Cysteine--tRNA ligase (465 aa).

Cys-29 contributes to the Zn(2+) binding site. Positions Pro-31–Asn-41 match the 'HIGH' region motif. Zn(2+)-binding residues include Cys-209, His-234, and Glu-238. The short motif at Lys-266 to Ser-270 is the 'KMSKS' region element. Lys-269 is a binding site for ATP. Position 270 is a phosphoserine (Ser-270).

It belongs to the class-I aminoacyl-tRNA synthetase family. As to quaternary structure, monomer. Zn(2+) serves as cofactor.

The protein resides in the cytoplasm. The catalysed reaction is tRNA(Cys) + L-cysteine + ATP = L-cysteinyl-tRNA(Cys) + AMP + diphosphate. The chain is Cysteine--tRNA ligase from Bacillus cytotoxicus (strain DSM 22905 / CIP 110041 / 391-98 / NVH 391-98).